Consider the following 339-residue polypeptide: tRNA N6-adenosine threonylcarbamoyltransferase (339 aa).

H111 and H115 together coordinate Fe cation. Residues 134–138, D167, G180, and N272 contribute to the substrate site; that span reads LVSGG. D300 serves as a coordination point for Fe cation.

This sequence belongs to the KAE1 / TsaD family. The cofactor is Fe(2+).

It is found in the cytoplasm. It catalyses the reaction L-threonylcarbamoyladenylate + adenosine(37) in tRNA = N(6)-L-threonylcarbamoyladenosine(37) in tRNA + AMP + H(+). In terms of biological role, required for the formation of a threonylcarbamoyl group on adenosine at position 37 (t(6)A37) in tRNAs that read codons beginning with adenine. Is involved in the transfer of the threonylcarbamoyl moiety of threonylcarbamoyl-AMP (TC-AMP) to the N6 group of A37, together with TsaE and TsaB. TsaD likely plays a direct catalytic role in this reaction. In Vibrio cholerae serotype O1 (strain ATCC 39541 / Classical Ogawa 395 / O395), this protein is tRNA N6-adenosine threonylcarbamoyltransferase.